The following is a 332-amino-acid chain: Cytoplasmic phosphatidylinositol transfer protein 1 (332 aa).

A phosphoserine mark is found at S119, S122, S270, and S274. A compositionally biased stretch (low complexity) spans 272–281 (PSSAPSTPLS). The interval 272-332 (PSSAPSTPLS…SEKPCRPKSE (61 aa)) is disordered. The residue at position 278 (T278) is a Phosphothreonine.

It belongs to the PtdIns transfer protein family. PI transfer class IIB subfamily. Widely expressed in brain, with expression in the gray matters of pre- and postnatal brains. In terms of tissue distribution, weakly expressed in brain and is rather confined to the embryonic stage.

It is found in the cytoplasm. Its subcellular location is the nucleus. The catalysed reaction is a 1,2-diacyl-sn-glycero-3-phospho-(1D-myo-inositol)(in) = a 1,2-diacyl-sn-glycero-3-phospho-(1D-myo-inositol)(out). It carries out the reaction a 1,2-diacyl-sn-glycero-3-phosphate(in) = a 1,2-diacyl-sn-glycero-3-phosphate(out). Functionally, catalyzes the transfer of phosphatidylinositol (PI) and phosphatidic acid (PA) between membranes. Binds PA derived from the phospholipase D signaling pathway and among the cellular PA species, preferably binds to the C16:0/16:1 and C16:1/18:1 PA species. In terms of biological role, specifically binds to phosphatidylinositol but not to other phospholipids and may play a role in the phosphoinositide-mediated signaling in the neural development. The sequence is that of Cytoplasmic phosphatidylinositol transfer protein 1 (Pitpnc1) from Mus musculus (Mouse).